Here is a 414-residue protein sequence, read N- to C-terminus: Multifunctional CCA protein (414 aa).

2 residues coordinate ATP: Gly-8 and Arg-11. CTP-binding residues include Gly-8 and Arg-11. Residues Glu-21 and Asp-23 each coordinate Mg(2+). ATP-binding residues include Arg-91, Arg-137, and Arg-140. Residues Arg-91, Arg-137, and Arg-140 each coordinate CTP. Residues Thr-228–Trp-329 enclose the HD domain.

Belongs to the tRNA nucleotidyltransferase/poly(A) polymerase family. Bacterial CCA-adding enzyme type 1 subfamily. As to quaternary structure, monomer. Can also form homodimers and oligomers. It depends on Mg(2+) as a cofactor. Requires Ni(2+) as cofactor.

The enzyme catalyses a tRNA precursor + 2 CTP + ATP = a tRNA with a 3' CCA end + 3 diphosphate. It carries out the reaction a tRNA with a 3' CCA end + 2 CTP + ATP = a tRNA with a 3' CCACCA end + 3 diphosphate. In terms of biological role, catalyzes the addition and repair of the essential 3'-terminal CCA sequence in tRNAs without using a nucleic acid template. Adds these three nucleotides in the order of C, C, and A to the tRNA nucleotide-73, using CTP and ATP as substrates and producing inorganic pyrophosphate. tRNA 3'-terminal CCA addition is required both for tRNA processing and repair. Also involved in tRNA surveillance by mediating tandem CCA addition to generate a CCACCA at the 3' terminus of unstable tRNAs. While stable tRNAs receive only 3'-terminal CCA, unstable tRNAs are marked with CCACCA and rapidly degraded. The sequence is that of Multifunctional CCA protein from Pectobacterium atrosepticum (strain SCRI 1043 / ATCC BAA-672) (Erwinia carotovora subsp. atroseptica).